The following is a 167-amino-acid chain: MSTTQSERLRGLLEPLVSAQQLDLEEIEVSRAGRRGVLRIIVDSEEGVELDACAELSRAISEKLDETDAMGEGEYVLEVSSPGADRPLTEHRHYVRATGRLARFHLAGDGSGELVARILAVDEEGLDLEVPGVKGRKPTARRLAFDEIARARVEIEFNRKDKKEEEA.

This sequence belongs to the RimP family.

The protein localises to the cytoplasm. Its function is as follows. Required for maturation of 30S ribosomal subunits. The sequence is that of Ribosome maturation factor RimP from Streptomyces griseus subsp. griseus (strain JCM 4626 / CBS 651.72 / NBRC 13350 / KCC S-0626 / ISP 5235).